The sequence spans 143 residues: Protein SLC31A2 (143 aa).

Topologically, residues 1-22 (MPMHFIFSDEAVLLFDFWRVHS) are extracellular. Residues 23–43 (PTGMALSVLVVLLLAVLYEGI) traverse the membrane as a helical segment. Residues 44 to 93 (KVGKAKLLHKTLESLPATNSQQFILGPDQDSTGSRSTSDNRTRLRWFLCY) are Cytoplasmic-facing. At Thr-75 the chain carries Phosphothreonine. Ser-77 is subject to Phosphoserine. A helical transmembrane segment spans residues 94–114 (FGQSLVHVIQVVIGYFVMLAV). The Extracellular portion of the chain corresponds to 115–119 (MSYNT). Residues 120–140 (WIFLGVVLGSAVGYYLAYPLL) form a helical membrane-spanning segment. The Cytoplasmic segment spans residues 141 to 143 (NMT).

The protein belongs to the copper transporter (Ctr) (TC 1.A.56) family. SLC31A subfamily. Oligomer. Interacts with SLC31A1; this interaction stabilizes SLC31A2 and protects it from ubiquitination and the subsequent degradation. Post-translationally, ubiquitinated; ubiquitination and the subsequent proteasomal degradation are prevent by SLC31A1 that stabilizes it.

It localises to the membrane. The protein resides in the cytoplasmic vesicle membrane. The protein localises to the late endosome membrane. Its subcellular location is the lysosome membrane. It is found in the recycling endosome membrane. Does not function as a copper(1+) importer in vivo. However, in vitro functions as a low-affinity copper(1+) importer. Regulator of SLC31A1 which facilitates the cleavage of the SLC31A1 ecto-domain or which stabilizes the truncated form of SLC31A1 (Truncated CTR1 form), thereby drives the SLC31A1 truncated form-dependent endosomal copper export and modulates the copper and cisplatin accumulation via SLC31A1. This is Protein SLC31A2 from Mus musculus (Mouse).